The chain runs to 611 residues: Dihydroxy-acid dehydratase (611 aa).

Asp-81 contacts Mg(2+). Residue Cys-122 coordinates [2Fe-2S] cluster. Residues Asp-123 and Lys-124 each coordinate Mg(2+). At Lys-124 the chain carries N6-carboxylysine. [2Fe-2S] cluster is bound at residue Cys-195. Glu-491 contributes to the Mg(2+) binding site. The active-site Proton acceptor is the Ser-517.

The protein belongs to the IlvD/Edd family. In terms of assembly, homodimer. [2Fe-2S] cluster serves as cofactor. It depends on Mg(2+) as a cofactor.

It carries out the reaction (2R)-2,3-dihydroxy-3-methylbutanoate = 3-methyl-2-oxobutanoate + H2O. The catalysed reaction is (2R,3R)-2,3-dihydroxy-3-methylpentanoate = (S)-3-methyl-2-oxopentanoate + H2O. It functions in the pathway amino-acid biosynthesis; L-isoleucine biosynthesis; L-isoleucine from 2-oxobutanoate: step 3/4. Its pathway is amino-acid biosynthesis; L-valine biosynthesis; L-valine from pyruvate: step 3/4. Its function is as follows. Functions in the biosynthesis of branched-chain amino acids. Catalyzes the dehydration of (2R,3R)-2,3-dihydroxy-3-methylpentanoate (2,3-dihydroxy-3-methylvalerate) into 2-oxo-3-methylpentanoate (2-oxo-3-methylvalerate) and of (2R)-2,3-dihydroxy-3-methylbutanoate (2,3-dihydroxyisovalerate) into 2-oxo-3-methylbutanoate (2-oxoisovalerate), the penultimate precursor to L-isoleucine and L-valine, respectively. This is Dihydroxy-acid dehydratase from Histophilus somni (strain 2336) (Haemophilus somnus).